A 663-amino-acid chain; its full sequence is Rap1 GTPase-activating protein 1 (663 aa).

The 17-residue stretch at 1 to 17 (MIEKMQGSRMDEQRCSF) folds into the GoLoco domain. The disordered stretch occupies residues 1 to 23 (MIEKMQGSRMDEQRCSFPPPLKT). Phosphoserine is present on phenylalanine 17. A Rap-GAP domain is found at 181–397 (IVTFDEHVIS…RTRAALLETL (217 aa)). Serine 441 is modified (phosphoserine). Disordered regions lie at residues 442–604 (MDAM…PHKR) and 616–645 (SVSTTSGGSSPGPSRSPHPDAGKLGDPACP). Over residues 450 to 465 (KKPNTVSTSHSGSFAP) the composition is skewed to polar residues. 5 positions are modified to phosphoserine: serine 484, serine 499, serine 515, serine 541, and serine 542. The segment covering 535-549 (ENSSTQSSPEMPTTK) has biased composition (polar residues). Low complexity predominate over residues 567-579 (RSSSSASSFASVV). Acidic residues predominate over residues 580-591 (EETEGVDGEDTG). The segment covering 616-630 (SVSTTSGGSSPGPSR) has biased composition (low complexity).

Homodimer and heterodimer with RAP1B. As to expression, significant expression seen in the brain, kidney and pancreas. Abundant in the cerebral cortex and expressed at much lower levels in the spinal cord. Not detected in the lymphoid tissues.

It is found in the golgi apparatus membrane. GTPase activator for the nuclear Ras-related regulatory protein RAP-1A (KREV-1), converting it to the putatively inactive GDP-bound state. The chain is Rap1 GTPase-activating protein 1 (RAP1GAP) from Homo sapiens (Human).